The following is a 1128-amino-acid chain: Inactive phospholipase C-like protein 2 (1128 aa).

The disordered stretch occupies residues 1 to 129 (MAECGRGAAG…KKTVSFSSMP (129 aa)). N-acetylalanine is present on alanine 2. A Phosphoserine modification is found at serine 16. Residues 20 to 30 (ALGAKGALKAG) are compositionally biased toward low complexity. Gly residues predominate over residues 31–43 (AGEGGGGGGGGRL). A Phosphothreonine modification is found at threonine 85. The PH domain occupies 142-252 (NSMVEGSELK…WVTGLRYLIS (111 aa)). The PI-PLC X-box domain occupies 427–571 (QDMKQPLSHY…LKGKILIKAK (145 aa)). At threonine 585 the chain carries Phosphothreonine. A PI-PLC Y-box domain is found at 619–735 (LSELVSICKS…GYVLRPAIMR (117 aa)). The C2 domain occupies 735 to 864 (REEVSFFSAN…TGYRHVPLQS (130 aa)). A disordered region spans residues 1100 to 1128 (KPGTENSEAQKPRRSLEAIPEKASDENGD). Basic and acidic residues predominate over residues 1107-1128 (EAQKPRRSLEAIPEKASDENGD). At serine 1114 the chain carries Phosphoserine.

As to expression, ubiquitously expressed, with a strong expression in skeletal muscle.

It is found in the cytoplasm. May play an role in the regulation of Ins(1,4,5)P3 around the endoplasmic reticulum. In Mus musculus (Mouse), this protein is Inactive phospholipase C-like protein 2 (Plcl2).